A 540-amino-acid chain; its full sequence is Chaperonin GroEL (540 aa).

Residues 29–32 (TLGP), 86–90 (DGTTT), G413, 476–478 (NAA), and D492 contribute to the ATP site.

It belongs to the chaperonin (HSP60) family. In terms of assembly, forms a cylinder of 14 subunits composed of two heptameric rings stacked back-to-back. Interacts with the co-chaperonin GroES.

It is found in the cytoplasm. It carries out the reaction ATP + H2O + a folded polypeptide = ADP + phosphate + an unfolded polypeptide.. Its function is as follows. Together with its co-chaperonin GroES, plays an essential role in assisting protein folding. The GroEL-GroES system forms a nano-cage that allows encapsulation of the non-native substrate proteins and provides a physical environment optimized to promote and accelerate protein folding. The chain is Chaperonin GroEL from Streptococcus sanguinis.